The following is a 126-amino-acid chain: Holo-[acyl-carrier-protein] synthase (126 aa).

Mg(2+) contacts are provided by Asp-9 and Glu-58.

It belongs to the P-Pant transferase superfamily. AcpS family. Requires Mg(2+) as cofactor.

The protein resides in the cytoplasm. It carries out the reaction apo-[ACP] + CoA = holo-[ACP] + adenosine 3',5'-bisphosphate + H(+). Transfers the 4'-phosphopantetheine moiety from coenzyme A to a Ser of acyl-carrier-protein. This is Holo-[acyl-carrier-protein] synthase from Buchnera aphidicola subsp. Schizaphis graminum (strain Sg).